Reading from the N-terminus, the 94-residue chain is Pyrimidine/purine nucleoside phosphorylase (94 aa).

The protein belongs to the nucleoside phosphorylase PpnP family.

It carries out the reaction a purine D-ribonucleoside + phosphate = a purine nucleobase + alpha-D-ribose 1-phosphate. It catalyses the reaction adenosine + phosphate = alpha-D-ribose 1-phosphate + adenine. The enzyme catalyses cytidine + phosphate = cytosine + alpha-D-ribose 1-phosphate. The catalysed reaction is guanosine + phosphate = alpha-D-ribose 1-phosphate + guanine. It carries out the reaction inosine + phosphate = alpha-D-ribose 1-phosphate + hypoxanthine. It catalyses the reaction thymidine + phosphate = 2-deoxy-alpha-D-ribose 1-phosphate + thymine. The enzyme catalyses uridine + phosphate = alpha-D-ribose 1-phosphate + uracil. The catalysed reaction is xanthosine + phosphate = alpha-D-ribose 1-phosphate + xanthine. Functionally, catalyzes the phosphorolysis of diverse nucleosides, yielding D-ribose 1-phosphate and the respective free bases. Can use uridine, adenosine, guanosine, cytidine, thymidine, inosine and xanthosine as substrates. Also catalyzes the reverse reactions. The chain is Pyrimidine/purine nucleoside phosphorylase from Teredinibacter turnerae (strain ATCC 39867 / T7901).